The primary structure comprises 512 residues: MKAGCSIVEKPEGGGGYQFPDWAYKTESSPGSRQIQLWHFILELLQKEEFRHVIAWQQGEYGEFVIKDPDEVARLWGRRKCKPQMNYDKLSRALRYYYNKRILHKTKGKRFTYKFNFNKLVMPNYPFINIRSSGVVPQSAPPVPTASSRFHFPPLDTHSPTNDVQPGRFSASSLTASGQESSNGTDRKTELSELEDGSAADWRRGVDPMSSRNAIGGGGIGHQKRKPDIMLPLFARPGMYPDPHSPFAVSPIPGRGGVLNVPISPALSLTPTIFSYSPSPGLSPFTSSSCFSFNPEEMKHYLHSQACSVFNYHLSPRTFPRYPGLMVPPLQCQMHPEESTQFSIKLQPPPVGRKNRERVESSEESAPVTTPTMASIPPRIKVEPASEKDPESLRQSAREKEEHTQEEGTVPSRTIEEEKGTIFARPAAPPIWPSVPISTPSEEPLEVTEDIEDRPGKEPSAPEKKEDALMPPKLRLKRRWNDDPEARELSKSGKFLWNGSGPQGLATAAADA.

The segment at residues 35-116 is a DNA-binding region (ETS); the sequence is IQLWHFILEL…KGKRFTYKFN (82 aa). The disordered stretch occupies residues 136–222; it reads VPQSAPPVPT…NAIGGGGIGH (87 aa). Residues Ser-139, Ser-159, and Ser-315 each carry the phosphoserine modification. Polar residues predominate over residues 158–184; sequence HSPTNDVQPGRFSASSLTASGQESSNG. The interval 336-512 is disordered; it reads PEESTQFSIK…QGLATAAADA (177 aa). The span at 380–406 shows a compositional bias: basic and acidic residues; sequence IKVEPASEKDPESLRQSAREKEEHTQE. A Glycyl lysine isopeptide (Lys-Gly) (interchain with G-Cter in SUMO2) cross-link involves residue Lys-381. The residue at position 388 (Lys-388) is an N6-acetyllysine; alternate. Lys-388 is covalently cross-linked (Glycyl lysine isopeptide (Lys-Gly) (interchain with G-Cter in SUMO2); alternate). The segment covering 443-452 has biased composition (acidic residues); the sequence is EPLEVTEDIE. Basic and acidic residues-rich tracts occupy residues 453-468 and 479-491; these read DRPG…KEDA and RWND…ELSK.

It belongs to the ETS family.

The protein localises to the nucleus. In terms of biological role, transcriptional repressor that contribute to growth arrest during terminal macrophage differentiation by repressing target genes involved in Ras-dependent proliferation. Represses MMP1 promoter activity. In Pan troglodytes (Chimpanzee), this protein is ETS translocation variant 3 (ETV3).